The primary structure comprises 444 residues: Aspartate--tRNA(Asp/Asn) ligase (444 aa).

Glu176 serves as a coordination point for L-aspartate. Residues 198-201 are aspartate; that stretch reads QLFK. L-aspartate is bound at residue Arg220. ATP is bound by residues 220–222, 228–230, and Glu367; these read RAE and RHL. Glu367 and Ser370 together coordinate Mg(2+). The L-aspartate site is built by Ser370 and Arg374. 415–418 is an ATP binding site; sequence GCER.

Belongs to the class-II aminoacyl-tRNA synthetase family. Type 2 subfamily. In terms of assembly, homodimer. Mg(2+) serves as cofactor.

It is found in the cytoplasm. The enzyme catalyses tRNA(Asx) + L-aspartate + ATP = L-aspartyl-tRNA(Asx) + AMP + diphosphate. Functionally, aspartyl-tRNA synthetase with relaxed tRNA specificity since it is able to aspartylate not only its cognate tRNA(Asp) but also tRNA(Asn). Reaction proceeds in two steps: L-aspartate is first activated by ATP to form Asp-AMP and then transferred to the acceptor end of tRNA(Asp/Asn). This is Aspartate--tRNA(Asp/Asn) ligase from Methanosarcina barkeri (strain Fusaro / DSM 804).